The chain runs to 329 residues: VSG expression site-associated protein 221A (329 aa).

Residues methionine 1–glutamine 23 form the signal peptide. Residues asparagine 73, asparagine 294, and asparagine 308 are each glycosylated (N-linked (GlcNAc...) asparagine).

In terms of biological role, not known but may be related to activation of the variant surface glycoprotein genes. The protein is VSG expression site-associated protein 221A of Trypanosoma brucei brucei.